We begin with the raw amino-acid sequence, 178 residues long: Transcription factor E (178 aa).

One can recognise an HTH TFE/IIEalpha-type domain in the interval 5 to 89 (AEELILSLAK…YWKVNIDQIN (85 aa)).

This sequence belongs to the TFE family. Monomer. Interaction with RNA polymerase subunits RpoF and RpoE is necessary for Tfe stimulatory transcription activity. Able to interact with Tbp and RNA polymerase in the absence of DNA promoter. Interacts both with the preinitiation and elongation complexes.

In terms of biological role, transcription factor that plays a role in the activation of archaeal genes transcribed by RNA polymerase. Facilitates transcription initiation by enhancing TATA-box recognition by TATA-box-binding protein (Tbp), and transcription factor B (Tfb) and RNA polymerase recruitment. Not absolutely required for transcription in vitro, but particularly important in cases where Tbp or Tfb function is not optimal. It dynamically alters the nucleic acid-binding properties of RNA polymerases by stabilizing the initiation complex and destabilizing elongation complexes. Seems to translocate with the RNA polymerase following initiation and acts by binding to the non template strand of the transcription bubble in elongation complexes. The polypeptide is Transcription factor E (Sulfurisphaera tokodaii (strain DSM 16993 / JCM 10545 / NBRC 100140 / 7) (Sulfolobus tokodaii)).